A 710-amino-acid chain; its full sequence is Polyribonucleotide nucleotidyltransferase (710 aa).

2 residues coordinate Mg(2+): aspartate 488 and aspartate 494. In terms of domain architecture, KH spans proline 555 to isoleucine 614. Residues glycine 624–lysine 692 enclose the S1 motif domain.

It belongs to the polyribonucleotide nucleotidyltransferase family. The cofactor is Mg(2+).

Its subcellular location is the cytoplasm. The catalysed reaction is RNA(n+1) + phosphate = RNA(n) + a ribonucleoside 5'-diphosphate. In terms of biological role, involved in mRNA degradation. Catalyzes the phosphorolysis of single-stranded polyribonucleotides processively in the 3'- to 5'-direction. The chain is Polyribonucleotide nucleotidyltransferase from Maricaulis maris (strain MCS10) (Caulobacter maris).